A 193-amino-acid polypeptide reads, in one-letter code: Calcium-binding protein E63-1 (193 aa).

EF-hand domains are found at residues 35-70 (VEIKDLRTAFDLLDRNRDGRVTANELQFMLKNLGIN), 71-106 (VSDELIHDLIREASHSGNGLINEAEFLQWVGRIQAL), 127-162 (DVTEDLIAAFRVFDRDGNGFITRDELQTAMEMIGEP), and 163-193 (LNEQQLEQLLVIADLDQDGRINYEEFTRLLL). 5 residues coordinate Ca(2+): Asp48, Asn50, Asp52, Arg54, and Glu59. Residues Asp140, Asp142, Asn144, Glu151, Asp176, Asp178, Asp180, Arg182, and Glu187 each coordinate Ca(2+).

This chain is Calcium-binding protein E63-1 (Eip63F-1), found in Drosophila melanogaster (Fruit fly).